Reading from the N-terminus, the 478-residue chain is SPbeta prophage-derived uncharacterized protein YonD (478 aa).

A coiled-coil region spans residues 326-419 (IQSQLNQKDE…KFSTEEVQNL (94 aa)).

This Bacillus subtilis (strain 168) protein is SPbeta prophage-derived uncharacterized protein YonD (yonD).